The following is a 353-amino-acid chain: Putative actin-28 (353 aa).

This sequence belongs to the actin family.

It is found in the cytoplasm. It localises to the cytoskeleton. The enzyme catalyses ATP + H2O = ADP + phosphate + H(+). Functionally, actins are highly conserved proteins that are involved in various types of cell motility and are ubiquitously expressed in all eukaryotic cells. Multiple isoforms are involved in various cellular functions such as cytoskeleton structure, cell mobility, chromosome movement and muscle contraction. This Dictyostelium discoideum (Social amoeba) protein is Putative actin-28 (act28).